The primary structure comprises 238 residues: Ribonuclease PH (238 aa).

Residues R86 and G124–R126 contribute to the phosphate site.

Belongs to the RNase PH family. As to quaternary structure, homohexameric ring arranged as a trimer of dimers.

The enzyme catalyses tRNA(n+1) + phosphate = tRNA(n) + a ribonucleoside 5'-diphosphate. Its function is as follows. Phosphorolytic 3'-5' exoribonuclease that plays an important role in tRNA 3'-end maturation. Removes nucleotide residues following the 3'-CCA terminus of tRNAs; can also add nucleotides to the ends of RNA molecules by using nucleoside diphosphates as substrates, but this may not be physiologically important. Probably plays a role in initiation of 16S rRNA degradation (leading to ribosome degradation) during starvation. This is Ribonuclease PH from Haemophilus influenzae (strain 86-028NP).